The following is a 339-amino-acid chain: Ribosomal RNA large subunit methyltransferase F (339 aa).

The segment at 1–26 is disordered; the sequence is MTAPSTPKPQRKKPKTATTAKPVVPR.

It belongs to the methyltransferase superfamily. METTL16/RlmF family.

It is found in the cytoplasm. It catalyses the reaction adenosine(1618) in 23S rRNA + S-adenosyl-L-methionine = N(6)-methyladenosine(1618) in 23S rRNA + S-adenosyl-L-homocysteine + H(+). Specifically methylates the adenine in position 1618 of 23S rRNA. In Pseudomonas fluorescens (strain SBW25), this protein is Ribosomal RNA large subunit methyltransferase F.